The sequence spans 412 residues: ATP phosphoribosyltransferase regulatory subunit (412 aa).

This sequence belongs to the class-II aminoacyl-tRNA synthetase family. HisZ subfamily. As to quaternary structure, heteromultimer composed of HisG and HisZ subunits.

It is found in the cytoplasm. It participates in amino-acid biosynthesis; L-histidine biosynthesis; L-histidine from 5-phospho-alpha-D-ribose 1-diphosphate: step 1/9. Required for the first step of histidine biosynthesis. May allow the feedback regulation of ATP phosphoribosyltransferase activity by histidine. The protein is ATP phosphoribosyltransferase regulatory subunit of Dehalococcoides mccartyi (strain ATCC BAA-2100 / JCM 16839 / KCTC 5957 / BAV1).